Consider the following 1290-residue polypeptide: 1-phosphatidylinositol 4,5-bisphosphate phosphodiesterase gamma-1 (1290 aa).

N-acetylalanine is present on Ala-2. The PH 1 domain maps to 27–142 (RSLEVGTVMT…WIKGLTWLME (116 aa)). An EF-hand domain is found at 152–187 (QIERWLRKQFYSVDRNREDRISAKDLKNMLSQVNYR). Ca(2+)-binding residues include Asp-165, Asn-167, Glu-169, Arg-171, and Asp-176. Positions 320–464 (DTMNNPLSHY…LKRKILIKHK (145 aa)) constitute a PI-PLC X-box domain. Active-site residues include His-335 and His-380. A PH 2; first part domain is found at 489–523 (SIKNGILYLEDPVNHEWYPHYFVLTSSKIYYSEET). Position 506 is a phosphotyrosine (Tyr-506). The segment at 522–544 (ETSSDQGNEDEEEPKEVSSSTEL) is disordered. SH2 domains are found at residues 550–657 (WFHG…SEPV) and 668–756 (WYHA…RYPI). At Tyr-771 the chain carries Phosphotyrosine; by SYK. At Tyr-775 the chain carries Phosphotyrosine. A Phosphotyrosine; by ITK, SYK and TXK modification is found at Tyr-783. The region spanning 791-851 (TFKCAVKALF…PSNYVEEMVN (61 aa)) is the SH3 domain. One can recognise a PH 2; second part domain in the interval 895–931 (FVFSISMASVAHWSLDVAADSQEELQDWVKKIREVAQ). Positions 953-1070 (LSELVVYCRP…GYVLQPSTMR (118 aa)) constitute a PI-PLC Y-box domain. Tyr-977 carries the post-translational modification Phosphotyrosine. The C2 domain occupies 1071–1194 (DEAFDPFDKS…TGYRAVPLKN (124 aa)). Ser-1221, Pro-1222, Ser-1227, Ser-1233, and Ser-1248 each carry phosphoserine. The residue at position 1253 (Tyr-1253) is a Phosphotyrosine. The residue at position 1263 (Ser-1263) is a Phosphoserine. The disordered stretch occupies residues 1271–1290 (FDSRERRAPRRTRVNGDNRL).

As to quaternary structure, interacts with AGAP2 via its SH3 domain. Interacts (via SH2 domain) with RET. Interacts with FLT1 (tyrosine-phosphorylated). Interacts (via SH2 domain) with FGFR1, FGFR2, FGFR3 and FGFR4 (phosphorylated). Interacts with LAT (phosphorylated) upon TCR activation. Interacts (via SH3 domain) with the Pro-rich domain of TNK1. Associates with BLNK, VAV1, GRB2 and NCK1 in a B-cell antigen receptor-dependent fashion. Interacts with CBLB in activated T-cells; which inhibits phosphorylation. Interacts with SHB. Interacts (via SH3 domain) with the Arg/Gly-rich-flanked Pro-rich domains of KHDRBS1/SAM68. This interaction is selectively regulated by arginine methylation of KHDRBS1/SAM68. Interacts with INPP5D/SHIP1, THEMIS and CLNK. Interacts with AXL, FLT4 and KIT. Interacts with RALGPS1. Interacts (via the SH2 domains) with VIL1 (phosphorylated at C-terminus tyrosine phosphorylation sites). Interacts (via SH2 domain) with PDGFRA and PDGFRB (tyrosine phosphorylated). Interacts with PIP5K1C. Interacts with NTRK1 and NTRK2 (phosphorylated upon ligand-binding). Interacts with SYK; activates PLCG1. Interacts with GRB2, LAT and THEMIS upon TCR activation in thymocytes. Interacts with TESPA1; the association is increased with prolonged stimulation of the TCR and may facilitate the assembly of the LAT signalosome. Interacts (via C-terminal proline-rich domain (PRD)) with PLCG1 (via SH3 domain); this interaction leads to guanine nucleotide exchange from PlCG1 to DNM1 and enhances DNM1-dependent endocytosis. In terms of assembly, (Microbial infection) Interacts (via SH3 domain) with HEV ORF3 protein. It depends on Ca(2+) as a cofactor. Tyrosine phosphorylated in response to signaling via activated FLT3, KIT and PDGFRA. Tyrosine phosphorylated by activated FGFR1, FGFR2, FGFR3 and FGFR4. Tyrosine phosphorylated by activated FLT1 and KDR. Tyrosine phosphorylated by activated PDGFRB. The receptor-mediated activation of PLCG1 involves its phosphorylation by tyrosine kinases, in response to ligation of a variety of growth factor receptors and immune system receptors. For instance, SYK phosphorylates and activates PLCG1 in response to ligation of the B-cell receptor. May be dephosphorylated by PTPRJ. Phosphorylated by ITK and TXK on Tyr-783 upon TCR activation in T-cells. In terms of processing, ubiquitinated by CBLB in activated T-cells.

It is found in the cell projection. Its subcellular location is the lamellipodium. The protein localises to the ruffle. The enzyme catalyses a 1,2-diacyl-sn-glycero-3-phospho-(1D-myo-inositol-4,5-bisphosphate) + H2O = 1D-myo-inositol 1,4,5-trisphosphate + a 1,2-diacyl-sn-glycerol + H(+). It carries out the reaction a 1,2-diacyl-sn-glycero-3-phospho-(1D-myo-inositol) + H2O = 1D-myo-inositol 1-phosphate + a 1,2-diacyl-sn-glycerol + H(+). Its activity is regulated as follows. Activated by phosphorylation on tyrosine residues. Functionally, mediates the production of the second messenger molecules diacylglycerol (DAG) and inositol 1,4,5-trisphosphate (IP3). Plays an important role in the regulation of intracellular signaling cascades. Becomes activated in response to ligand-mediated activation of receptor-type tyrosine kinases, such as PDGFRA, PDGFRB, EGFR, FGFR1, FGFR2, FGFR3 and FGFR4. Plays a role in actin reorganization and cell migration. Guanine nucleotide exchange factor that binds the GTPase DNM1 and catalyzes the dissociation of GDP, allowing a GTP molecule to bind in its place, therefore enhancing DNM1-dependent endocytosis. In Homo sapiens (Human), this protein is 1-phosphatidylinositol 4,5-bisphosphate phosphodiesterase gamma-1.